A 367-amino-acid polypeptide reads, in one-letter code: tRNA-specific 2-thiouridylase MnmA (367 aa).

Residues 9 to 16 (GLSGGVDS) and methionine 35 contribute to the ATP site. An interaction with target base in tRNA region spans residues 95–97 (NPD). Cysteine 100 (nucleophile) is an active-site residue. A disulfide bridge connects residues cysteine 100 and cysteine 196. Glycine 124 is a binding site for ATP. The tract at residues 146–148 (KDQ) is interaction with tRNA. Catalysis depends on cysteine 196, which acts as the Cysteine persulfide intermediate. An interaction with tRNA region spans residues 308–309 (RY).

The protein belongs to the MnmA/TRMU family.

It localises to the cytoplasm. It catalyses the reaction S-sulfanyl-L-cysteinyl-[protein] + uridine(34) in tRNA + AH2 + ATP = 2-thiouridine(34) in tRNA + L-cysteinyl-[protein] + A + AMP + diphosphate + H(+). Catalyzes the 2-thiolation of uridine at the wobble position (U34) of tRNA, leading to the formation of s(2)U34. The protein is tRNA-specific 2-thiouridylase MnmA of Nitrosococcus oceani (strain ATCC 19707 / BCRC 17464 / JCM 30415 / NCIMB 11848 / C-107).